The chain runs to 242 residues: Tryptophan synthase alpha chain (242 aa).

Active-site proton acceptor residues include Glu-31 and Asp-42.

Belongs to the TrpA family. In terms of assembly, tetramer of two alpha and two beta chains.

The catalysed reaction is (1S,2R)-1-C-(indol-3-yl)glycerol 3-phosphate + L-serine = D-glyceraldehyde 3-phosphate + L-tryptophan + H2O. It participates in amino-acid biosynthesis; L-tryptophan biosynthesis; L-tryptophan from chorismate: step 5/5. The alpha subunit is responsible for the aldol cleavage of indoleglycerol phosphate to indole and glyceraldehyde 3-phosphate. The polypeptide is Tryptophan synthase alpha chain (Staphylococcus aureus (strain USA300)).